The sequence spans 354 residues: uncharacterized protein (354 aa).

This sequence belongs to the asfivirus B354L family.

This is an uncharacterized protein from Ornithodoros (relapsing fever ticks).